A 265-amino-acid chain; its full sequence is Uridylate kinase (265 aa).

The tract at residues 1 to 29 (MTESREPHVAGSAAPRPEPANGLASGQPS) is disordered. 40 to 43 (KLGG) contacts ATP. Gly81 is a UMP binding site. Residues Gly82 and Arg86 each contribute to the ATP site. UMP-binding positions include Asp101 and 162–169 (MGLPYFST). ATP-binding residues include Phe195 and Asp198.

Belongs to the UMP kinase family. As to quaternary structure, homohexamer.

The protein resides in the cytoplasm. It carries out the reaction UMP + ATP = UDP + ADP. Its pathway is pyrimidine metabolism; CTP biosynthesis via de novo pathway; UDP from UMP (UMPK route): step 1/1. Its activity is regulated as follows. Inhibited by UTP. Its function is as follows. Catalyzes the reversible phosphorylation of UMP to UDP. In Mycobacterium avium (strain 104), this protein is Uridylate kinase.